A 249-amino-acid polypeptide reads, in one-letter code: UPF0758 protein Oant_1909 (249 aa).

The MPN domain occupies 127-249 (VLGSWNKVIE…HASFRGLGLI (123 aa)). Zn(2+) is bound by residues H198, H200, and D211. Residues 198-211 (HNHPSGDPTPSRAD) carry the JAMM motif motif.

It belongs to the UPF0758 family.

The polypeptide is UPF0758 protein Oant_1909 (Brucella anthropi (strain ATCC 49188 / DSM 6882 / CCUG 24695 / JCM 21032 / LMG 3331 / NBRC 15819 / NCTC 12168 / Alc 37) (Ochrobactrum anthropi)).